We begin with the raw amino-acid sequence, 181 residues long: Bradykinin-potentiating and C-type natriuretic peptides (181 aa).

The signal sequence occupies residues 1–23 (MFVSRLAASGLLLLALLAVSLDG). Residues 24 to 30 (KPLQQWS) constitute a propeptide that is removed on maturation. Residue Q31 is modified to Pyrrolidone carboxylic acid. Residues 41-43 (LVV) constitute a propeptide that is removed on maturation. A Pyrrolidone carboxylic acid modification is found at Q44. 2 consecutive propeptides follow at residues 50–78 (TQLQ…AALD) and 90–157 (GSKA…KGLA). The interval 74–153 (EAALDTPPAG…GGGGGGARRL (80 aa)) is disordered. A compositionally biased stretch (low complexity) spans 104 to 114 (SKGASATSAAS). A compositionally biased stretch (gly residues) spans 140–150 (AGGGGGGGGGA). C165 and C181 are disulfide-bonded.

This sequence in the N-terminal section; belongs to the bradykinin-potentiating peptide family. The protein in the C-terminal section; belongs to the natriuretic peptide family. In terms of tissue distribution, venom gland.

The protein localises to the secreted. Functionally, bradykinin-potentiating peptide both inhibits the activity of the angiotensin-converting enzyme (ACE) and enhances the action of bradykinin by inhibiting the peptidases that inactivate it. It acts as an indirect hypotensive agent. In terms of biological role, antagonizes the vasodilatory actions of bradykinin at the B2 bradykinin receptor. Has no demonstrable hypotensive activity when injected intravenously in rats. Has a vasorelaxant activity in rat aortic strips and a diuretic potency in anesthetized rats. May act by activating natriuretic receptors (NPR1 and/or NPR2). The sequence is that of Bradykinin-potentiating and C-type natriuretic peptides from Crotalus durissus collilineatus (Brazilian rattlesnake).